The following is a 323-amino-acid chain: Lipoyl synthase (323 aa).

The [4Fe-4S] cluster site is built by cysteine 61, cysteine 66, cysteine 72, cysteine 87, cysteine 91, cysteine 94, and serine 300. Positions 73–289 (WDKKHATFMI…ETVAYSKGFL (217 aa)) constitute a Radical SAM core domain.

Belongs to the radical SAM superfamily. Lipoyl synthase family. [4Fe-4S] cluster serves as cofactor.

It localises to the cytoplasm. It carries out the reaction [[Fe-S] cluster scaffold protein carrying a second [4Fe-4S](2+) cluster] + N(6)-octanoyl-L-lysyl-[protein] + 2 oxidized [2Fe-2S]-[ferredoxin] + 2 S-adenosyl-L-methionine + 4 H(+) = [[Fe-S] cluster scaffold protein] + N(6)-[(R)-dihydrolipoyl]-L-lysyl-[protein] + 4 Fe(3+) + 2 hydrogen sulfide + 2 5'-deoxyadenosine + 2 L-methionine + 2 reduced [2Fe-2S]-[ferredoxin]. It participates in protein modification; protein lipoylation via endogenous pathway; protein N(6)-(lipoyl)lysine from octanoyl-[acyl-carrier-protein]: step 2/2. Catalyzes the radical-mediated insertion of two sulfur atoms into the C-6 and C-8 positions of the octanoyl moiety bound to the lipoyl domains of lipoate-dependent enzymes, thereby converting the octanoylated domains into lipoylated derivatives. The sequence is that of Lipoyl synthase from Rhizobium etli (strain ATCC 51251 / DSM 11541 / JCM 21823 / NBRC 15573 / CFN 42).